A 305-amino-acid chain; its full sequence is Aspartate carbamoyltransferase catalytic subunit (305 aa).

Carbamoyl phosphate-binding residues include Arg54 and Thr55. Residue Lys82 coordinates L-aspartate. Carbamoyl phosphate contacts are provided by Arg104, His132, and Gln135. L-aspartate-binding residues include Arg165 and Arg218. Positions 259 and 260 each coordinate carbamoyl phosphate.

The protein belongs to the aspartate/ornithine carbamoyltransferase superfamily. ATCase family. Heterododecamer (2C3:3R2) of six catalytic PyrB chains organized as two trimers (C3), and six regulatory PyrI chains organized as three dimers (R2).

The enzyme catalyses carbamoyl phosphate + L-aspartate = N-carbamoyl-L-aspartate + phosphate + H(+). It functions in the pathway pyrimidine metabolism; UMP biosynthesis via de novo pathway; (S)-dihydroorotate from bicarbonate: step 2/3. Catalyzes the condensation of carbamoyl phosphate and aspartate to form carbamoyl aspartate and inorganic phosphate, the committed step in the de novo pyrimidine nucleotide biosynthesis pathway. In Caldicellulosiruptor bescii (strain ATCC BAA-1888 / DSM 6725 / KCTC 15123 / Z-1320) (Anaerocellum thermophilum), this protein is Aspartate carbamoyltransferase catalytic subunit.